The following is a 145-amino-acid chain: Snaclec salmorin subunit B (145 aa).

The first 23 residues, 1-23 (MGRFIFVSFGLLVVFVSLSGTGA), serve as a signal peptide directing secretion. 3 disulfides stabilise this stretch: Cys25/Cys36, Cys53/Cys141, and Cys118/Cys133. Residues 32–142 (YEGHCYKLFN…CRMEAYFVCE (111 aa)) form the C-type lectin domain. 2 residues coordinate Ca(2+): Ser64 and Glu70. A Ca(2+)-binding site is contributed by Glu142.

The protein belongs to the snaclec family. As to quaternary structure, heterodimer of subunits A and B; disulfide-linked. As to expression, expressed by the venom gland.

The protein localises to the secreted. Its function is as follows. Inhibits thrombin-induced fibrinogen clotting and factor Xa-induced prothrombin activation. Binds to thrombin and prothrombin exosites. In Gloydius brevicauda (Korean slamosa snake), this protein is Snaclec salmorin subunit B.